A 436-amino-acid polypeptide reads, in one-letter code: uncharacterized protein (436 aa).

This is an uncharacterized protein from Haemophilus influenzae (strain ATCC 51907 / DSM 11121 / KW20 / Rd).